Reading from the N-terminus, the 232-residue chain is MLGAMFRADTLMPANLNPQGDGHYFIDRDGKAFRHILNFLRLGRLDLPRGYGETALLKAEADFYQIRPLLDALRELEASRGTPASTAALLHADVDVSPRQVHFSARRGPHHYELSSVQVDTFRANLFCTDPECLAAMRNRFGVAIGDRAEGGPHFRLEWASRPQELPEVEYQRLGLQPLWTGGPEDRREVANTPTFLEEVLRVALEHGFRLDSVFPDPEDLLNSRSLRFVRH.

A BTB domain is found at 1–49 (MLGAMFRADTLMPANLNPQGDGHYFIDRDGKAFRHILNFLRLGRLDLPR).

Homopentamer. Interacts with KCTD6 and KCTD21; KCTD11 and KCTD6 or KCTD21 may associate in pentameric assemblies. Component of the BCR(KCTD11) E3 ubiquitin ligase complex, at least composed of CUL3 and KCTD11 and RBX1. Interacts (via BTB domain) with CUL3; initially a 4:4 stoichiometry has been reported, however, electron microscopy revealed pentameric states of the BTB domain. In terms of tissue distribution, weakly expressed in lung. In the cerebellum, higher expression in non proliferating external granule cells layer than in highly proliferating ones.

It functions in the pathway protein modification; protein ubiquitination. Plays a role as a marker and a regulator of neuronal differentiation; Up-regulated by a variety of neurogenic signals, such as retinoic acid, epidermal growth factor/EGF and NGFB/nerve growth factor. Induces apoptosis, growth arrest and the expression of cyclin-dependent kinase inhibitor CDKN1B. Plays a role as a tumor repressor and inhibits cell growth and tumorigenicity of medulloblastoma (MDB). Acts as a probable substrate-specific adapter for a BCR (BTB-CUL3-RBX1) E3 ubiquitin-protein ligase complex towards HDAC1. Functions as antagonist of the Hedgehog pathway on cell proliferation and differentiation by affecting the nuclear transfer of transcription factor GLI1, thus maintaining cerebellar granule cells in undifferentiated state, this effect probably occurs via HDAC1 down-regulation, keeping GLI1 acetylated and inactive. When knock-down, Hedgehog antagonism is impaired and proliferation of granule cells is sustained. Activates the caspase cascade. This Mus musculus (Mouse) protein is BTB/POZ domain-containing protein KCTD11 (Kctd11).